Here is a 342-residue protein sequence, read N- to C-terminus: Anthranilate phosphoribosyltransferase (342 aa).

Residues glycine 83, 86–87, threonine 91, 93–96, 111–119, and serine 123 contribute to the 5-phospho-alpha-D-ribose 1-diphosphate site; these read GD, NVST, and KHGNRSVSG. Position 83 (glycine 83) interacts with anthranilate. Serine 95 lines the Mg(2+) pocket. An anthranilate-binding site is contributed by asparagine 114. Arginine 169 provides a ligand contact to anthranilate. Residues aspartate 228 and glutamate 229 each coordinate Mg(2+).

Belongs to the anthranilate phosphoribosyltransferase family. Homodimer. Requires Mg(2+) as cofactor.

The catalysed reaction is N-(5-phospho-beta-D-ribosyl)anthranilate + diphosphate = 5-phospho-alpha-D-ribose 1-diphosphate + anthranilate. The protein operates within amino-acid biosynthesis; L-tryptophan biosynthesis; L-tryptophan from chorismate: step 2/5. Functionally, catalyzes the transfer of the phosphoribosyl group of 5-phosphorylribose-1-pyrophosphate (PRPP) to anthranilate to yield N-(5'-phosphoribosyl)-anthranilate (PRA). The chain is Anthranilate phosphoribosyltransferase from Halorhodospira halophila (strain DSM 244 / SL1) (Ectothiorhodospira halophila (strain DSM 244 / SL1)).